The primary structure comprises 2511 residues: MEEVVIAGMSGKLPESENLQEFWDNLIGGVDMVTDDDRRWKAGLYGLPRRSGKLKDLSRFDASFFGVHPKQAHTMDPQLRLLLEVTYEAIVDGGINPDSLRGTHTGVWVGVSGSETSEALSRDPETLVGYSMVGCQRAMMANRLSFFFDFRGPSIALDTACSSSLMALQNAYQAIHSGQCPAAIVGGINVLLKPNTSVQFLRLGMLSPEGTCKAFDTAGNGYCRSEGVVAVLLTKKSLARRVYATILNAGTNTDGFKEQGVTFPSGDIQEQLIRSLYQSAGVAPESFEYIEAHGTGTKVGDPQELNGITRALCATRQEPLLIGSTKSNMGHPEPASGLAALAKVLLSLEHGLWAPNLHFHSPNPEIPALLDGRLQVVDQPLPVRGGNVGINSFGFGGSNVHIILRPNTQPPPAPAPHATLPRLLRASGRTPEAVQKLLEQGLRHSQDLAFLSMLNDIAAVPATAMPFRGYAVLGGERGGPEVQQVPAGERPLWFICSGMGTQWRGMGLSLMRLDRFRDSILRSDEAVKPFGLKVSQLLLSTDESTFDDIVHSFVSLTAIQIGLIDLLSCMGLRPDGIVGHSLGEVACGYADGCLSQEEAVLAAYWRGQCIKEAHLPPGAMAAVGLSWEECKQRCPPGVVPACHNSKDTVTISGPQAPVFEFVEQLRKEGVFAKEVRTGGMAFHSYFMEAIAPPLLQELKKVIREPKPRSARWLSTSIPEAQWHSSLARTSSAEYNVNNLVSPVLFQEALWHVPEHAVVLEIAPHALLQAVLKRGLKPSCTIIPLMKKDHRDNLEFFLAGIGRLHLSGIDANPNALFPPVEFPAPRGTPLISPLIKWDHSLAWDVPAAEDFPNGSGSPSAAIYNIDTSSESPDHYLVDHTLDGRVLFPATGYLSIVWKTLARALGLGVEQLPVVFEDVVLHQATILPKTGTVSLEVRLLEASRAFEVSENGNLVVSGKVYQWDDPDPRLFDHPESPTPNPTEPLFLAQAEVYKELRLRGYDYGPHFQGILEASLEGDSGRLLWKDNWVSFMDTMLQMSILGSAKHGLYLPTRVTAIHIDPATHRQKLYTLQDKAQVADVVVSRWLRVTVAGGVHISGLHTESAPRRQQEQQVPILEKFCFTPHTEEGCLSERAALQEELQLCKGLVQALQTKVTQQGLKMVVPGLDGAQIPRDPSQQELPRLLSAACRLQLNGNLQLELAQVLAQERPKLPEDPLLSGLLDSPALKACLDTAVENMPSLKMKVVEVLAGHGHLYSRIPGLLSPHPLLQLSYTATDRHPQALEAAQAELQQHDVAQGQWDPADPAPSALGSADLLVCNCAVAALGDPASALSNMVAALREGGFLLLHTLLRGHPLGDIVAFLTSTEPQYGQGILSQDAWESLFSRVSLRLVGLKKSFYGSTLFLCRRPTPQDSPIFLPVDDTSFRWVESLKGILADEDSSRPVWLKAINCATSGVVGLVNCLRREPGGNRLRCVLLSNLSSTSHVPEVDPGSAELQKVLQGDLVMNVYRDGAWGAFRHFLLEEDKPEEPTAHAFVSTLTRGDLSSIRWVCSSLRHAQPTCPGAQLCTVYYASLNFRDIMLATGKLSPDAIPGKWTSQDSLLGMEFSGRDASGKRVMGLVPAKGLATSVLLSPDFLWDVPSNWTLEEAASVPVVYSTAYYALVVRGRVRPGETLLIHSGSGGVGQAAIAIALSLGCRVFTTVGSAEKRAYLQARFPQLDSTSFANSRDTSFEQHVLWHTGGKGVDLVLNSLAEEKLQASVRCLATHGRFLEIGKFDLSQNHPLGMAIFLKNVTFHGVLLDAFFNESSADWREVWALVQAGIRDGVVRPLKCTVFHGAQVEDAFRYMAQGKHIGKVVVQVLAEEPEAVLKGAKPKLMSAISKTFCPAHKSYIIAGGLGGFGLELAQWLIQRGVQKLVLTSRSGIRTGYQAKQVRRWRRQGVQVQVSTSNISSLEGARGLIAEAAQLGPVGGVFNLAVVLRDGLLENQTPEFFQDVCKPKYSGTLNLDRVTREACPELDYFVVFSSVSCGRGNAGQSNYGFANSAMERICEKRRHEGLPGLAVQWGAIGDVGILVETMSTNDTIVSGTLPQRMASCLEVLDLFLNQPHMVLSSFVLAEKAAAYRDRDSQRDLVEAVAHILGIRDLAAVNLDSSLADLGLDSLMSVEVRQTLERELNLVLSVREVRQLTLRKLQELSSKADEASELACPTPKEDGLAQQQTQLNLRSLLVNPEGPTLMRLNSVQSSERPLFLVHPIEGSTTVFHSLASRLSIPTYGLQCTRAAPLDSIHSLAAYYIDCIRQVQPEGPYRVAGYSYGACVAFEMCSQLQAQQSPAPTHNSLFLFDGSPTYVLAYTQSYRAKLTPGCEAEAETEAICFFVQQFTDMEHNRVLEALLPLKGLEERVAAAVDLIIKSHQGLDRQELSFAARSFYYKLRAAEQYTPKAKYHGNVMLLRAKTGGAYGEDLGADYNLSQVCDGKVSVHVIEGDHRTLLEGSGLESIISIIHSSLAEPRVSVREG.

M1 is subject to N-acetylmethionine. A Ketosynthase family 3 (KS3) domain is found at 1–406 (MEEVVIAGMS…GSNVHIILRP (406 aa)). Phosphoserine is present on S63. K70 carries the N6-acetyllysine modification. The For beta-ketoacyl synthase activity role is filled by C161. A Phosphoserine modification is found at S207. Catalysis depends on H293, which acts as the For beta-ketoacyl synthase activity. K298 bears the N6-acetyllysine mark. H331 acts as the For beta-ketoacyl synthase activity in catalysis. The acyl and malonyl transferases stretch occupies residues 429 to 817 (RTPEAVQKLL…IDANPNALFP (389 aa)). An N6-acetyllysine mark is found at K436 and K528. The For malonyltransferase activity role is filled by S581. An acyl-CoA contacts are provided by residues 647 to 648 (DT) and F671. Residue K673 is modified to N6-acetyllysine. S725 carries the phosphoserine modification. R773 provides a ligand contact to an acyl-CoA. An N-terminal hotdog fold region spans residues 838–966 (HSLAWDVPAA…KVYQWDDPDP (129 aa)). The 271-residue stretch at 838 to 1108 (HSLAWDVPAA…TESAPRRQQE (271 aa)) folds into the PKS/mFAS DH domain. H878 acts as the Proton acceptor; for dehydratase activity in catalysis. A C-terminal hotdog fold region spans residues 981-1108 (EPLFLAQAEV…TESAPRRQQE (128 aa)). Residue K992 is modified to N6-acetyllysine. D1031 (proton donor; for dehydratase activity) is an active-site residue. Residues S1174 and S1411 each carry the phosphoserine modification. Residue C1471 is modified to S-nitrosocysteine. Phosphoserine is present on residues S1584 and S1594. The segment at 1635 to 1863 (DVPSNWTLEE…VQVLAEEPEA (229 aa)) is enoyl reductase. 1671 to 1688 (LLIHSGSGGVGQAAIAIA) contributes to the NADP(+) binding site. K1704 is subject to N6-(pyridoxal phosphate)lysine; alternate. K1704 carries the N6-acetyllysine; alternate modification. An N6-acetyllysine mark is found at K1771 and K1847. The beta-ketoacyl reductase stretch occupies residues 1864 to 2118 (VLKGAKPKLM…FVLAEKAAAY (255 aa)). 1886-1901 (SYIIAGGLGGFGLELA) serves as a coordination point for NADP(+). K1995 is subject to N6-acetyllysine. C2091 bears the S-nitrosocysteine mark. The Carrier domain maps to 2121–2198 (RDSQRDLVEA…ELSSKADEAS (78 aa)). At S2156 the chain carries O-(pantetheine 4'-phosphoryl)serine; alternate. Phosphoserine; alternate is present on S2156. S2198 carries the post-translational modification Phosphoserine. T2204 and T2215 each carry phosphothreonine. A thioesterase region spans residues 2207–2511 (EDGLAQQQTQ…AEPRVSVREG (305 aa)). S2236 carries the phosphoserine modification. S2308 acts as the For thioesterase activity in catalysis. K2391 bears the N6-acetyllysine mark. K2449 is covalently cross-linked (Glycyl lysine isopeptide (Lys-Gly) (interchain with G-Cter in SUMO2)). The For thioesterase activity role is filled by H2481.

In terms of assembly, homodimer which is arranged in a head to tail fashion. Interacts with CEACAM1; this interaction is insulin and phosphorylation-dependent; reduces fatty-acid synthase activity. Post-translationally, S-nitrosylation of Fatty acid synthase at cysteine residues Cys-1471 or Cys-2091 is important for the enzyme dimerization. In adipocytes, S-nitrosylation of Fatty acid synthase occurs under physiological conditions and gradually increases during adipogenesis. In terms of tissue distribution, ubiquitous. Prominent expression in brain, lung, liver and mammary gland.

The protein localises to the cytoplasm. The protein resides in the melanosome. It catalyses the reaction acetyl-CoA + n malonyl-CoA + 2n NADPH + 2n H(+) = a long-chain fatty acid + (n+1) CoA + n CO2 + 2n NADP(+).. The catalysed reaction is holo-[ACP] + acetyl-CoA = acetyl-[ACP] + CoA. The enzyme catalyses holo-[ACP] + malonyl-CoA = malonyl-[ACP] + CoA. It carries out the reaction a fatty acyl-[ACP] + malonyl-[ACP] + H(+) = a 3-oxoacyl-[ACP] + holo-[ACP] + CO2. It catalyses the reaction a (3R)-hydroxyacyl-[ACP] + NADP(+) = a 3-oxoacyl-[ACP] + NADPH + H(+). The catalysed reaction is a (3R)-hydroxyacyl-[ACP] = a (2E)-enoyl-[ACP] + H2O. The enzyme catalyses a 2,3-saturated acyl-[ACP] + NADP(+) = a (2E)-enoyl-[ACP] + NADPH + H(+). It carries out the reaction hexadecanoyl-[ACP] + H2O = hexadecanoate + holo-[ACP] + H(+). It catalyses the reaction acetyl-[ACP] + malonyl-[ACP] + H(+) = 3-oxobutanoyl-[ACP] + holo-[ACP] + CO2. The catalysed reaction is 3-oxobutanoyl-[ACP] + NADPH + H(+) = (3R)-hydroxybutanoyl-[ACP] + NADP(+). The enzyme catalyses (3R)-hydroxybutanoyl-[ACP] = (2E)-butenoyl-[ACP] + H2O. It carries out the reaction (2E)-butenoyl-[ACP] + NADPH + H(+) = butanoyl-[ACP] + NADP(+). It catalyses the reaction butanoyl-[ACP] + malonyl-[ACP] + H(+) = 3-oxohexanoyl-[ACP] + holo-[ACP] + CO2. The catalysed reaction is 3-oxohexanoyl-[ACP] + NADPH + H(+) = (3R)-hydroxyhexanoyl-[ACP] + NADP(+). The enzyme catalyses (3R)-hydroxyhexanoyl-[ACP] = (2E)-hexenoyl-[ACP] + H2O. It carries out the reaction (2E)-hexenoyl-[ACP] + NADPH + H(+) = hexanoyl-[ACP] + NADP(+). It catalyses the reaction hexanoyl-[ACP] + malonyl-[ACP] + H(+) = 3-oxooctanoyl-[ACP] + holo-[ACP] + CO2. The catalysed reaction is 3-oxooctanoyl-[ACP] + NADPH + H(+) = (3R)-hydroxyoctanoyl-[ACP] + NADP(+). The enzyme catalyses (3R)-hydroxyoctanoyl-[ACP] = (2E)-octenoyl-[ACP] + H2O. It carries out the reaction (2E)-octenoyl-[ACP] + NADPH + H(+) = octanoyl-[ACP] + NADP(+). It catalyses the reaction octanoyl-[ACP] + malonyl-[ACP] + H(+) = 3-oxodecanoyl-[ACP] + holo-[ACP] + CO2. The catalysed reaction is 3-oxodecanoyl-[ACP] + NADPH + H(+) = (3R)-hydroxydecanoyl-[ACP] + NADP(+). The enzyme catalyses (3R)-hydroxydecanoyl-[ACP] = (2E)-decenoyl-[ACP] + H2O. It carries out the reaction (2E)-decenoyl-[ACP] + NADPH + H(+) = decanoyl-[ACP] + NADP(+). It catalyses the reaction decanoyl-[ACP] + malonyl-[ACP] + H(+) = 3-oxododecanoyl-[ACP] + holo-[ACP] + CO2. The catalysed reaction is 3-oxododecanoyl-[ACP] + NADPH + H(+) = (3R)-hydroxydodecanoyl-[ACP] + NADP(+). The enzyme catalyses (3R)-hydroxydodecanoyl-[ACP] = (2E)-dodecenoyl-[ACP] + H2O. It carries out the reaction (2E)-dodecenoyl-[ACP] + NADPH + H(+) = dodecanoyl-[ACP] + NADP(+). It catalyses the reaction dodecanoyl-[ACP] + malonyl-[ACP] + H(+) = 3-oxotetradecanoyl-[ACP] + holo-[ACP] + CO2. The catalysed reaction is 3-oxotetradecanoyl-[ACP] + NADPH + H(+) = (3R)-hydroxytetradecanoyl-[ACP] + NADP(+). The enzyme catalyses (3R)-hydroxytetradecanoyl-[ACP] = (2E)-tetradecenoyl-[ACP] + H2O. It carries out the reaction (2E)-tetradecenoyl-[ACP] + NADPH + H(+) = tetradecanoyl-[ACP] + NADP(+). It catalyses the reaction tetradecanoyl-[ACP] + malonyl-[ACP] + H(+) = 3-oxohexadecanoyl-[ACP] + holo-[ACP] + CO2. The catalysed reaction is 3-oxohexadecanoyl-[ACP] + NADPH + H(+) = (3R)-hydroxyhexadecanoyl-[ACP] + NADP(+). The enzyme catalyses (3R)-hydroxyhexadecanoyl-[ACP] = (2E)-hexadecenoyl-[ACP] + H2O. It carries out the reaction (2E)-hexadecenoyl-[ACP] + NADPH + H(+) = hexadecanoyl-[ACP] + NADP(+). It catalyses the reaction hexadecanoyl-[ACP] + malonyl-[ACP] + H(+) = 3-oxooctadecanoyl-[ACP] + holo-[ACP] + CO2. The catalysed reaction is 3-oxooctadecanoyl-[ACP] + NADPH + H(+) = (3R)-hydroxyoctadecanoyl-[ACP] + NADP(+). The enzyme catalyses (3R)-hydroxyoctadecanoyl-[ACP] = (2E)-octadecenoyl-[ACP] + H2O. It carries out the reaction (2E)-octadecenoyl-[ACP] + NADPH + H(+) = octadecanoyl-[ACP] + NADP(+). It catalyses the reaction tetradecanoyl-[ACP] + H2O = tetradecanoate + holo-[ACP] + H(+). The catalysed reaction is octadecanoyl-[ACP] + H2O = octadecanoate + holo-[ACP] + H(+). It participates in lipid metabolism; fatty acid biosynthesis. Its activity is regulated as follows. Activated by S-nitrosylation which promotes enzyme dimerization. Cerulenin, a potent non-competitive pharmacological inhibitor of FAS, binds covalently to the active site of the condensing enzyme region, inactivating a key enzyme step in fatty acid synthesis. Functionally, fatty acid synthetase is a multifunctional enzyme that catalyzes the de novo biosynthesis of long-chain saturated fatty acids starting from acetyl-CoA and malonyl-CoA in the presence of NADPH. This multifunctional protein contains 7 catalytic activities and a site for the binding of the prosthetic group 4'-phosphopantetheine of the acyl carrier protein ([ACP]) domain. Its function is as follows. (Microbial infection) Fatty acid synthetase activity is required for SARS coronavirus-2/SARS-CoV-2 replication. This is Fatty acid synthase (FASN) from Homo sapiens (Human).